Here is a 425-residue protein sequence, read N- to C-terminus: Nicotinate dehydrogenase large molybdopterin subunit (425 aa).

Residues Q208 and 238-240 (GFG) contribute to the Se-Mo-molybdopterin cytosine dinucleotide site.

The protein belongs to the xanthine dehydrogenase family. As to quaternary structure, heterooctamer of NDHM, NDHL, NDHS and NDHF. Dimer of heterotetramers. Requires Se-Mo-molybdopterin cytosine dinucleotide as cofactor.

The enzyme catalyses nicotinate + NADP(+) + H2O = 6-hydroxynicotinate + NADPH + H(+). Its pathway is cofactor degradation; nicotinate degradation; 6-hydroxynicotinate from nicotinate: step 1/1. Reversibly inactivated by selenide and sulfide. Not inhibited by cyanide. Its function is as follows. Catalyzes the hydroxylation of nicotinate to 6-hydroxynicotinate. Also active against 2-pyrazinecarboxylic acid, but inactive against other nicotinate analogs. This Eubacterium barkeri (Clostridium barkeri) protein is Nicotinate dehydrogenase large molybdopterin subunit (ndhL).